We begin with the raw amino-acid sequence, 370 residues long: Anhydro-N-acetylmuramic acid kinase (370 aa).

12-19 (GTSLDGID) is an ATP binding site.

The protein belongs to the anhydro-N-acetylmuramic acid kinase family.

The enzyme catalyses 1,6-anhydro-N-acetyl-beta-muramate + ATP + H2O = N-acetyl-D-muramate 6-phosphate + ADP + H(+). It participates in amino-sugar metabolism; 1,6-anhydro-N-acetylmuramate degradation. The protein operates within cell wall biogenesis; peptidoglycan recycling. Functionally, catalyzes the specific phosphorylation of 1,6-anhydro-N-acetylmuramic acid (anhMurNAc) with the simultaneous cleavage of the 1,6-anhydro ring, generating MurNAc-6-P. Is required for the utilization of anhMurNAc either imported from the medium or derived from its own cell wall murein, and thus plays a role in cell wall recycling. The protein is Anhydro-N-acetylmuramic acid kinase of Yersinia enterocolitica serotype O:8 / biotype 1B (strain NCTC 13174 / 8081).